The following is a 1425-amino-acid chain: Protein NAP1 (1425 aa).

Composition is skewed to polar residues over residues 1–20 (MANSRQYYPSQDESMSPTSV), 1299–1312 (TPLSTASPYHSPSV), and 1320–1329 (SMKNSTTPQR). Disordered stretches follow at residues 1-24 (MANSRQYYPSQDESMSPTSVRSRE) and 1299-1425 (TPLS…KQHN). Residues 1362–1405 (SETGNSRNNENNNNNKQRGSSRRSGPLDYSSSHKGGSGSNSTGP) are compositionally biased toward low complexity.

Belongs to the HEM-1/HEM-2 family. In terms of assembly, binds PIR. In terms of tissue distribution, expressed in roots, root hairs, hypocotyls, cotyledons, stems, leaves, trichomes, and flowers.

Functionally, involved in regulation of actin and microtubule organization. Part of a WAVE complex that activates the Arp2/3 complex. The protein is Protein NAP1 (NAP1) of Arabidopsis thaliana (Mouse-ear cress).